Reading from the N-terminus, the 432-residue chain is Nuclear pore complex-interacting protein family member B8 (432 aa).

2 disordered regions span residues 260 to 280 (RMGR…NSLS) and 353 to 420 (SPLP…LRTR). A compositionally biased stretch (polar residues) spans 270–280 (QQHSITDNSLS). A compositionally biased stretch (basic and acidic residues) spans 374–402 (EVEKPPKPKRWRVDEVEQSPKPKRQREAE). A compositionally biased stretch (basic residues) spans 408 to 420 (KPKRRRLSKLRTR).

It belongs to the NPIP family.

The protein is Nuclear pore complex-interacting protein family member B8 (NPIPB8) of Homo sapiens (Human).